Reading from the N-terminus, the 737-residue chain is Polyribonucleotide nucleotidyltransferase (737 aa).

Mg(2+) is bound by residues Asp-489 and Asp-495. The region spanning 556 to 615 (PKIDTIKIDVDKIKIVIGKGGETIDKIIAETGVKIDIDEEGNVSIYSSDQDAINRAKEII) is the KH domain. The 69-residue stretch at 625–693 (DEVYRAKVVR…EKGRIDASMK (69 aa)) folds into the S1 motif domain. The interval 691 to 737 (SMKALLPRPPKPEHDEKGEKSERPHRPRHHKDHKPKKEFTETPKDSE) is disordered. The segment covering 700-714 (PKPEHDEKGEKSERP) has biased composition (basic and acidic residues). Residues 715–724 (HRPRHHKDHK) are compositionally biased toward basic residues. A compositionally biased stretch (basic and acidic residues) spans 725–737 (PKKEFTETPKDSE).

Belongs to the polyribonucleotide nucleotidyltransferase family. Mg(2+) is required as a cofactor.

It localises to the cytoplasm. It catalyses the reaction RNA(n+1) + phosphate = RNA(n) + a ribonucleoside 5'-diphosphate. In terms of biological role, involved in mRNA degradation. Catalyzes the phosphorolysis of single-stranded polyribonucleotides processively in the 3'- to 5'-direction. This chain is Polyribonucleotide nucleotidyltransferase, found in Streptococcus pneumoniae serotype 19F (strain G54).